We begin with the raw amino-acid sequence, 220 residues long: Iron-sulfur cluster repair protein YtfE (220 aa).

Belongs to the RIC family. YtfE subfamily. As to quaternary structure, homodimer.

The protein localises to the cytoplasm. Its function is as follows. Di-iron-containing protein involved in the repair of iron-sulfur clusters damaged by oxidative and nitrosative stress conditions. The sequence is that of Iron-sulfur cluster repair protein YtfE from Escherichia coli (strain SMS-3-5 / SECEC).